The following is a 299-amino-acid chain: Leucine zipper transcription factor-like protein 1 (299 aa).

Residues 96 to 296 adopt a coiled-coil conformation; it reads LKLQTDISEL…DLRKRLAQYE (201 aa). The segment at 145-299 is interaction with BSS9; it reads GTAELLNKEI…KRLAQYEPED (155 aa).

Belongs to the LZTFL1 family. As to quaternary structure, self-associates. Interacts with BBS9; the interaction mediates the association of LZTL1 with the BBsome complex and regulates BBSome ciliary trafficking. As to expression, expressed in prostate, ovary, stomach, pancreas, esophagus, breast, liver, bladder, kidney, thyroid, colon and lung (at protein level). Down-regulated in multiple primary tumors (at protein level). Detected in testis, heart, skeletal muscle, thymus, spleen, small intestine, and peripheral blood leukocytes.

Its subcellular location is the cytoplasm. In terms of biological role, regulates ciliary localization of the BBSome complex. Together with the BBSome complex, controls SMO ciliary trafficking and contributes to the sonic hedgehog (SHH) pathway regulation. May play a role in neurite outgrowth. May have tumor suppressor function. The polypeptide is Leucine zipper transcription factor-like protein 1 (LZTFL1) (Homo sapiens (Human)).